Reading from the N-terminus, the 259-residue chain is Probable metal transport system ATP-binding protein TC_0339 (259 aa).

One can recognise an ABC transporter domain in the interval tryptophan 9–leucine 241. Glycine 41–serine 48 lines the ATP pocket.

Belongs to the ABC transporter superfamily.

It localises to the cell inner membrane. Part of an ATP-driven transport system TC_0338/TC_0339/TC_0341/TC_0342 for a metal. Probably responsible for energy coupling to the transport system. The chain is Probable metal transport system ATP-binding protein TC_0339 from Chlamydia muridarum (strain MoPn / Nigg).